A 145-amino-acid polypeptide reads, in one-letter code: Small ribosomal subunit protein uS19 (145 aa).

At alanine 2 the chain carries N-acetylalanine. A Glycyl lysine isopeptide (Lys-Gly) (interchain with G-Cter in SUMO2) cross-link involves residue lysine 108.

Belongs to the universal ribosomal protein uS19 family. In terms of assembly, component of the small ribosomal subunit.

The protein resides in the cytoplasm. In terms of biological role, component of the small ribosomal subunit. The ribosome is a large ribonucleoprotein complex responsible for the synthesis of proteins in the cell. In Mesocricetus auratus (Golden hamster), this protein is Small ribosomal subunit protein uS19 (RPS15).